The sequence spans 378 residues: Histidine decarboxylase (378 aa).

Substrate is bound at residue His-120. An N6-(pyridoxal phosphate)lysine modification is found at Lys-233.

It belongs to the group II decarboxylase family. In terms of assembly, homotetramer. Pyridoxal 5'-phosphate serves as cofactor.

It catalyses the reaction L-histidine + H(+) = histamine + CO2. The chain is Histidine decarboxylase (hdc) from Klebsiella aerogenes (Enterobacter aerogenes).